The sequence spans 702 residues: MIRTFEMELGGRPFVVELGKVAELAQGSCMIKYGDTFVLVTACASKEPKEGLDFFPLSCDYEEKLYAVGKIPGGFIKRESRPSEKATLTARLIDRPIRPLFPKGYHNDVQVIATVLSVDQDCPPDISAMIGSSIALSVSNIPFMGPTASVSVGMIDGKYIVNPTSEQKELSELELIVSGTKDAVMMIEAGANELTEAQILDAIMFAHEEIKKIVTFIEHIVSEVGKPKSEVIVKETDSELLAEVVSFLDTKLANAIKTVDKTERNENIKAISAEALDYFEEKYEGRSKEVNTILSKQIKVETRKMITSEGIRPDNRKLDEIRPISSEVGILPRTHGTGLFTRGETQVLTVTTLGDLRDAQRIDGLGEEDEKRYMHHYNFPPYSVGETRFMRGPSRREIGHGALVERALKPMIPCKEDFPYAIRLVSEVLACNGSSSQASVCGSTLSLMDAGVPIKGMVAGIAMGLIKEEGQIAILSDIQGMEDALGDMDLKVAGTENGITALQMDIKIAGIDRNIMETALAQAKIGRTHILNKMKEAITSPRTELSAYAPQVTKLKVHPDKVREVIGAGGKVINKIIDETGVKINIENDGTIYIAAPDQESARVALEMIELIVKDPVVGEVYTGKVIKIMDFGAFVEILPGKEGLVHISNLAHERVAKVADVLAEGDLIEVKLMEINPQGKIGLSRKALLPKPEKEAPKKIE.

Positions 483 and 489 each coordinate Mg(2+). The region spanning 550-609 is the KH domain; that stretch reads PQVTKLKVHPDKVREVIGAGGKVINKIIDETGVKINIENDGTIYIAAPDQESARVALEMI. Residues 619-687 form the S1 motif domain; that stretch reads GEVYTGKVIK…PQGKIGLSRK (69 aa).

This sequence belongs to the polyribonucleotide nucleotidyltransferase family. Mg(2+) serves as cofactor.

It localises to the cytoplasm. It carries out the reaction RNA(n+1) + phosphate = RNA(n) + a ribonucleoside 5'-diphosphate. Functionally, involved in mRNA degradation. Catalyzes the phosphorolysis of single-stranded polyribonucleotides processively in the 3'- to 5'-direction. The protein is Polyribonucleotide nucleotidyltransferase 2 of Alkaliphilus metalliredigens (strain QYMF).